Reading from the N-terminus, the 173-residue chain is Mesencephalic astrocyte-derived neurotrophic factor homolog (173 aa).

The signal sequence occupies residues 1 to 22 (MKTWYMVVVIGFLATLAQTSLA). 4 disulfide bridges follow: Cys28/Cys114, Cys31/Cys103, Cys61/Cys72, and Cys148/Cys151.

This sequence belongs to the ARMET family.

It localises to the secreted. Required during the maturation of the embryonic nervous system for maintenance of neuronal and cuticular connectivity. Essential for maintenance of dopaminergic neurons and dopamine levels. In Drosophila erecta (Fruit fly), this protein is Mesencephalic astrocyte-derived neurotrophic factor homolog.